The primary structure comprises 954 residues: Translation initiation factor IF-2 (954 aa).

Residues 56–75 (KAAAPAAPKAPAPAAESRPA) are compositionally biased toward low complexity. A disordered region spans residues 56–355 (KAAAPAAPKA…GVSVPRGDGN (300 aa)). The segment covering 76–87 (APAPGPAAPKAP) has biased composition (pro residues). 2 stretches are compositionally biased toward low complexity: residues 88 to 125 (APKV…KPGA) and 138 to 151 (PRQG…SAPR). Residues 241–254 (PGAPRPGGPRPTPG) are compositionally biased toward pro residues. The span at 269–322 (GRPGGGGRGPGRPGAPGTGGPGGGGGAPAGGGFGKGGRGRGGTQGAFGKGGAGR) shows a compositional bias: gly residues. Residues 323 to 332 (GKQRKSKRAK) are compositionally biased toward basic residues. In terms of domain architecture, tr-type G spans 447 to 618 (PRAPVVTVMG…AVLLTADAAL (172 aa)). The tract at residues 456–463 (GHVDHGKT) is G1. 456–463 (GHVDHGKT) contributes to the GTP binding site. Positions 481–485 (GITQH) are G2. Residues 506 to 509 (DTPG) are G3. Residues 506–510 (DTPGH) and 560–563 (NKID) contribute to the GTP site. The segment at 560–563 (NKID) is G4. The G5 stretch occupies residues 596–598 (SAR).

Belongs to the TRAFAC class translation factor GTPase superfamily. Classic translation factor GTPase family. IF-2 subfamily.

It is found in the cytoplasm. In terms of biological role, one of the essential components for the initiation of protein synthesis. Protects formylmethionyl-tRNA from spontaneous hydrolysis and promotes its binding to the 30S ribosomal subunits. Also involved in the hydrolysis of GTP during the formation of the 70S ribosomal complex. In Pseudarthrobacter chlorophenolicus (strain ATCC 700700 / DSM 12829 / CIP 107037 / JCM 12360 / KCTC 9906 / NCIMB 13794 / A6) (Arthrobacter chlorophenolicus), this protein is Translation initiation factor IF-2.